A 361-amino-acid polypeptide reads, in one-letter code: uncharacterized protein (361 aa).

Residues 1 to 10 (MRRYLKKAKP) show a composition bias toward basic residues. Disordered stretches follow at residues 1–82 (MRRY…SSFH) and 94–147 (ALSH…VNTS). Composition is skewed to basic and acidic residues over residues 44–57 (KEKN…KYEN) and 120–134 (FTKK…ESEL). Polar residues predominate over residues 135-147 (QTRSSPPLPVNTS). Residues 295-349 (NILTMDEQIQRLKEAIASEKLQQEERSQIIKSLMEEELEINEQEEKIKHSFIDLD) are a coiled coil.

Its subcellular location is the cytoplasm. It is found in the nucleus. This is an uncharacterized protein from Schizosaccharomyces pombe (strain 972 / ATCC 24843) (Fission yeast).